Consider the following 3142-residue polypeptide: Huntingtin (3142 aa).

Residues 3 to 13 (TLEKLMKAFES) are sufficient for interaction with TPR. At Lys9 the chain carries N6-acetyllysine. The interval 14–85 (LKSFQQQQQQ…PGPAVAEEPL (72 aa)) is disordered. The segment covering 18–37 (QQQQQQQQQQQQQQQQQQQQ) has biased composition (low complexity). The segment covering 38 to 78 (QPPPPPPPPPPPQLPQPPPQAQPLLPQPQPPPPPPPPPPGP) has biased composition (pro residues). N6-acetyllysine occurs at positions 176 and 234. HEAT repeat units follow at residues 204–241 (PYLV…SFGN), 246–283 (NEIK…HSRR), and 316–360 (LTLR…VYEL). N6-acetyllysine is present on Lys343. Residues Ser411, Ser417, Ser419, and Ser432 each carry the phosphoserine modification. N6-acetyllysine is present on Lys442. Residues 447-469 (EEEALEDDSESRSDVSSSALTAS) form a disordered region. Residues 491–502 (GHDIITEQPRSQ) form an interaction with ZDHHC17 region. The interval 517–583 (LTSSATDGDE…TPSDSSEIVL (67 aa)) is disordered. A compositionally biased stretch (low complexity) spans 531-545 (SHSSSQVSAVPSDPA). Residues 550–579 (DGTQASSPISDSSQTTTEGPDSAVTPSDSS) show a composition bias toward polar residues. Gly551 carries N-myristoyl glycine lipidation. 2 positions are modified to phosphoserine: Ser640 and Ser643. HEAT repeat units lie at residues 802–839 (FSLA…SLCS) and 902–940 (KLQE…KLFY). Positions 1176–1225 (PSLSPIRRKGKEKEPGEQASVPLSPKKGSEASAASRQSDTSGPVTTSKSS) are disordered. Phosphoserine; by CDK5 is present on residues Ser1179 and Ser1199. Over residues 1207–1225 (SAASRQSDTSGPVTTSKSS) the composition is skewed to polar residues. A phosphoserine mark is found at Ser1870 and Ser1874. Residues 2330–2351 (ERRTNTPKAISEEEEEVDPNTQ) form a disordered region. The Nuclear export signal motif lies at 2395 to 2404 (IIISLARLPL). The interval 2633–2662 (EEEWDEEEEEEADAPAPSSPPTSPVNSRKH) is disordered. The segment covering 2634–2645 (EEWDEEEEEEAD) has biased composition (acidic residues).

This sequence belongs to the huntingtin family. In terms of assembly, interacts with PFN1. Interacts through its N-terminus with PRPF40A. Interacts with PQBP1. Interacts with SETD2. Interacts with SH3GLB1. Interacts with SYVN. Interacts with TPR; the interaction is inhibited by forms of Huntingtin with expanded polyglutamine stretch. Interacts with ZDHHC13 (via ANK repeats). Interacts with ZDHHC17 (via ANK repeats). Interacts with F8A1/F8A2/F8A3. Found in a complex with F8A1/F8A2/F8A3, HTT and RAB5A; mediates the recruitment of HTT by RAB5A. Cleaved by caspases downstream of the polyglutamine stretch. The resulting N-terminal fragments are cytotoxic and provokes apoptosis. In terms of processing, forms with expanded polyglutamine expansion are specifically ubiquitinated by SYVN1, which promotes their proteasomal degradation. Post-translationally, phosphorylation at Ser-1179 and Ser-1199 by CDK5 in response to DNA damage in nuclei of neurons protects neurons against polyglutamine expansion as well as DNA damage mediated toxicity. Myristoylated at Gly-551, following proteolytic cleavage at Asp-550. In terms of tissue distribution, expressed in the brain cortex (at protein level). Widely expressed with the highest level of expression in the brain (nerve fibers, varicosities, and nerve endings). In the brain, the regions where it can be mainly found are the cerebellar cortex, the neocortex, the striatum, and the hippocampal formation.

The protein localises to the cytoplasm. It is found in the nucleus. It localises to the early endosome. The protein resides in the cytoplasmic vesicle. Its subcellular location is the autophagosome. May play a role in microtubule-mediated transport or vesicle function. Functionally, promotes the formation of autophagic vesicles. The protein is Huntingtin (HTT) of Homo sapiens (Human).